Here is a 169-residue protein sequence, read N- to C-terminus: ATP synthase subunit b (169 aa).

Residues 12–32 (HIYLGNAIWYLLCFAILMLLI) form a helical membrane-spanning segment.

Belongs to the ATPase B chain family. F-type ATPases have 2 components, F(1) - the catalytic core - and F(0) - the membrane proton channel. F(1) has five subunits: alpha(3), beta(3), gamma(1), delta(1), epsilon(1). F(0) has three main subunits: a(1), b(2) and c(10-14). The alpha and beta chains form an alternating ring which encloses part of the gamma chain. F(1) is attached to F(0) by a central stalk formed by the gamma and epsilon chains, while a peripheral stalk is formed by the delta and b chains.

The protein localises to the cell membrane. Its activity is regulated as follows. Increases 2-fold following exposure to low pH. In terms of biological role, f(1)F(0) ATP synthase produces ATP from ADP in the presence of a proton or sodium gradient. F-type ATPases consist of two structural domains, F(1) containing the extramembraneous catalytic core and F(0) containing the membrane proton channel, linked together by a central stalk and a peripheral stalk. During catalysis, ATP synthesis in the catalytic domain of F(1) is coupled via a rotary mechanism of the central stalk subunits to proton translocation. Component of the F(0) channel, it forms part of the peripheral stalk, linking F(1) to F(0). The chain is ATP synthase subunit b from Lactobacillus acidophilus (strain ATCC 700396 / NCK56 / N2 / NCFM).